Consider the following 416-residue polypeptide: Gasdermin-B (416 aa).

Positions 1 to 280 (MFSVFEEITR…EKRKDVLNSL (280 aa)) are triggers pyroptosis. Beta stranded transmembrane passes span 83–101 (EFQI…VRLP) and 102–125 (KEIT…ENRI). Residues K166, K177, K190, and K192 each participate in a (Microbial infection) Glycyl lysine isopeptide (Lys-Gly) (interchain with G-Cter in ubiquitin) cross-link. 2 beta stranded membrane passes run 167–183 (EETL…SQIS) and 184–198 (QGHL…REVT). A disordered region spans residues 229–250 (KSFPEEKDGASSCLGKSLGSED). Residues 248–276 (SEDSRNMKEKLEDMESVLKDLTEEKRKDV) adopt a coiled-coil conformation. A (Microbial infection) Glycyl lysine isopeptide (Lys-Gly) (interchain with G-Cter in ubiquitin) cross-link involves residue M308.

Belongs to the gasdermin family. As to quaternary structure, homooligomer; homooligomeric ring-shaped pore complex containing 24-26 subunits when inserted in the membrane. Post-translationally, cleavage by granzyme A (GZMA) relieves autoinhibition by releasing the N-terminal moiety (Gasdermin-B, N-terminal) that initiates pyroptosis. Not cleaved by other granzymes. Major cleavage site takes places after Lys-244; a minor cleavage site takes place after Lys-229. Cleavage by neutrophil elastase ELANE, inhibits its ability to trigger pyroptosis. In terms of processing, palmitoylated. (Microbial infection) Ubiquitinated by S.flexneri IpaH7.8, leading to its degradation by the proteasome, thereby preventing its ability to form pores in bacterial-derived membranes. In the gastrointestinal tract, expressed in proliferating cells, including in the basal cell layer of esophagus and in isthmus/neck of stomach.

The protein resides in the cytoplasm. The protein localises to the cell membrane. With respect to regulation, the full-length protein before cleavage is inactive: intramolecular interactions between N- and C-terminal domains mediate autoinhibition in the absence of activation signal. The intrinsic pyroptosis-inducing activity is carried by the released N-terminal moiety (Gasdermin-B, N-terminal) following cleavage by granzyme A (GZMA). In terms of biological role, precursor of a pore-forming protein that acts as a downstream mediator of granzyme-mediated cell death. This form constitutes the precursor of the pore-forming protein: upon cleavage, the released N-terminal moiety (Gasdermin-B, N-terminal) binds to membranes and forms pores, triggering pyroptosis. Also acts as a regulator of epithelial cell repair independently of programmed cell death: translocates to the plasma membrane and promotes epithelial maintenance and repair by regulating PTK2/FAK-mediated phosphorylation of PDGFA. Pore-forming protein produced by cleavage by granzyme A (GZMA), which causes membrane permeabilization and pyroptosis in target cells of cytotoxic T and natural killer (NK) cells. Key downstream mediator of granzyme-mediated cell death: (1) granzyme A (GZMA), delivered to target cells from cytotoxic T- and NK-cells, (2) specifically cleaves Gasdermin-B to generate this form. After cleavage, moves to the plasma membrane, homooligomerizes within the membrane and forms pores of 10-15 nanometers (nm) of inner diameter, triggering pyroptosis. The different isoforms recognize and bind different phospholipids on membranes, promoting cell death of different target cells. Its function is as follows. Precursor of a pore-forming protein that acts as a downstream mediator of granzyme-mediated cell death and mediates pyroptosis. Following cleavage and activation by granzyme A (GZMA), the N-terminal part binds to membrane inner leaflet lipids, homooligomerizes within the human plasma membrane and forms pores of 10-15 nanometers (nm) of inner diameter, triggering pyroptosis. Recognizes and binds membrane inner leaflet lipids of human cells, such as phosphatidylinositol 4-phosphate, phosphatidylinositol 5-phosphate, bisphosphorylated phosphatidylinositols, such as phosphatidylinositol (4,5)-bisphosphate, and more weakly to phosphatidic acid. Also binds sufatide, a component of the apical membrane of epithelial cells. Functionally, precursor of a pore-forming protein that acts as a downstream mediator of granzyme-mediated cell death and mediates pyroptosis of human cells. Following cleavage and activation by granzyme A (GZMA), the N-terminal part binds to membrane inner leaflet lipids, homooligomerizes within the human plasma membrane and forms pores of 10-15 nanometers (nm) of inner diameter, triggering pyroptosis. In terms of biological role, precursor of a pore-forming protein that acts as a downstream mediator of granzyme-mediated cell death and specifically mediates cell death of Gram-negative bacteria in response to infection. Following cleavage and activation by granzyme A (GZMA), the N-terminal part recognizes and binds phospholipids found on Gram-negative bacterial membranes, such as lipid A and cariolipin, homooligomerizes within the bacterial membranes and forms pores, triggering pyroptosis followed by cell death. In contrast to isoform 4, does not bind to membrane inner leaflet lipids of host human cell, such as phosphatidylinositol 4-phosphate, phosphatidylinositol 5-phosphate, bisphosphorylated phosphatidylinositols, such as phosphatidylinositol (4,5)-bisphosphate. Not able to trigger pyroptosis. The sequence is that of Gasdermin-B from Homo sapiens (Human).